The chain runs to 656 residues: Protein NO VEIN-LIKE (656 aa).

The segment at 283–375 (DKDYCGKHTR…HVKQKIPKSA (93 aa)) is disordered. A compositionally biased stretch (acidic residues) spans 299 to 308 (EENDSADYEV). Basic and acidic residues predominate over residues 342–353 (ESRNHEKSDSPK). The segment covering 354 to 371 (LLRRGPSKLRRGHVKQKI) has biased composition (basic residues).

The polypeptide is Protein NO VEIN-LIKE (Arabidopsis thaliana (Mouse-ear cress)).